Here is a 218-residue protein sequence, read N- to C-terminus: UPF0173 metal-dependent hydrolase Mpal_1063 (218 aa).

It belongs to the UPF0173 family.

The sequence is that of UPF0173 metal-dependent hydrolase Mpal_1063 from Methanosphaerula palustris (strain ATCC BAA-1556 / DSM 19958 / E1-9c).